Consider the following 159-residue polypeptide: Phosphopantetheine adenylyltransferase (159 aa).

Residue Ser8 participates in substrate binding. ATP is bound by residues Ser8–Phe9 and His16. Lys40, Thr72, and Arg86 together coordinate substrate. ATP contacts are provided by residues Gly87–Arg89, Glu97, and His122–Ser128.

It belongs to the bacterial CoaD family. Homohexamer. It depends on Mg(2+) as a cofactor.

It localises to the cytoplasm. It carries out the reaction (R)-4'-phosphopantetheine + ATP + H(+) = 3'-dephospho-CoA + diphosphate. The protein operates within cofactor biosynthesis; coenzyme A biosynthesis; CoA from (R)-pantothenate: step 4/5. Functionally, reversibly transfers an adenylyl group from ATP to 4'-phosphopantetheine, yielding dephospho-CoA (dPCoA) and pyrophosphate. This Synechococcus sp. (strain JA-3-3Ab) (Cyanobacteria bacterium Yellowstone A-Prime) protein is Phosphopantetheine adenylyltransferase.